Here is a 272-residue protein sequence, read N- to C-terminus: MEKIKIIVASDSIGETAELVARAGISQFNPKQCKNELLRYPYIESFEDVDEVIQVAKDTNAIIVYTLIKPEMKQYMSEKVAEFQLKSVDIMGPLMDLLSASVEEKPYNEPGIVHRLDDAYFKKIDAIEFAVKYDDGKDPKGLPKADIVLLGISRTSKTPLSQYLAHKSYKVMNVPIVPEVTPPDGLYDIDPKKCIALKISEEKLNRIRKERLKQLGLGDTARYATEARIQEELNYFEEIVSEIGCPVIDVSQKAIEETANDIIHYIEQNKSK.

An ADP-binding site is contributed by 151–158 (GISRTSKT).

The protein belongs to the pyruvate, phosphate/water dikinase regulatory protein family. PDRP subfamily.

It carries out the reaction N(tele)-phospho-L-histidyl/L-threonyl-[pyruvate, phosphate dikinase] + ADP = N(tele)-phospho-L-histidyl/O-phospho-L-threonyl-[pyruvate, phosphate dikinase] + AMP + H(+). The enzyme catalyses N(tele)-phospho-L-histidyl/O-phospho-L-threonyl-[pyruvate, phosphate dikinase] + phosphate + H(+) = N(tele)-phospho-L-histidyl/L-threonyl-[pyruvate, phosphate dikinase] + diphosphate. In terms of biological role, bifunctional serine/threonine kinase and phosphorylase involved in the regulation of the pyruvate, phosphate dikinase (PPDK) by catalyzing its phosphorylation/dephosphorylation. This is Putative pyruvate, phosphate dikinase regulatory protein from Staphylococcus aureus (strain Mu3 / ATCC 700698).